We begin with the raw amino-acid sequence, 421 residues long: Queuine tRNA-ribosyltransferase accessory subunit 2 (421 aa).

Positions 328, 330, 333, and 359 each coordinate Zn(2+).

Belongs to the queuine tRNA-ribosyltransferase family. QTRT2 subfamily. Heterodimer of a catalytic subunit and an accessory subunit. Requires Zn(2+) as cofactor.

It is found in the cytoplasm. Non-catalytic subunit of the queuine tRNA-ribosyltransferase (TGT) that catalyzes the base-exchange of a guanine (G) residue with queuine (Q) at position 34 (anticodon wobble position) in tRNAs with GU(N) anticodons (tRNA-Asp, -Asn, -His and -Tyr), resulting in the hypermodified nucleoside queuosine (7-(((4,5-cis-dihydroxy-2-cyclopenten-1-yl)amino)methyl)-7-deazaguanosine). This chain is Queuine tRNA-ribosyltransferase accessory subunit 2, found in Aedes aegypti (Yellowfever mosquito).